A 180-amino-acid polypeptide reads, in one-letter code: Small ribosomal subunit protein uS4 (180 aa).

Residues 103-174 (RRLQTIVYKK…HPERMMIEKA (72 aa)) enclose the S4 RNA-binding domain.

The protein belongs to the universal ribosomal protein uS4 family. As to quaternary structure, part of the 30S ribosomal subunit. Contacts protein S5. The interaction surface between S4 and S5 is involved in control of translational fidelity.

Functionally, one of the primary rRNA binding proteins, it binds directly to 16S rRNA where it nucleates assembly of the body of the 30S subunit. With S5 and S12 plays an important role in translational accuracy. The chain is Small ribosomal subunit protein uS4 from Pyrococcus horikoshii (strain ATCC 700860 / DSM 12428 / JCM 9974 / NBRC 100139 / OT-3).